Reading from the N-terminus, the 72-residue chain is Protein kish-A (72 aa).

An N-terminal signal peptide occupies residues 1 to 26 (MSAIFNFQSLLTVILLLICTCAYIRS). Topologically, residues 27–53 (LAPSILDRNKTGLLGIFWKCARIGERK) are extracellular. An N-linked (GlcNAc...) asparagine glycan is attached at Asn-35. Residues 54-71 (SPYVAICCIVMAFSILFI) traverse the membrane as a helical segment. A topological domain (cytoplasmic) is located at residue Gln-72.

It belongs to the KISH family.

It is found in the golgi apparatus membrane. Its function is as follows. Involved in the early part of the secretory pathway. In Mus musculus (Mouse), this protein is Protein kish-A (Tmem167a).